The sequence spans 87 residues: Cyclin-dependent kinases regulatory subunit 1 (87 aa).

This sequence belongs to the CKS family. Interacts with CDKA-1. Interacts with CDKB1-1, CDKB1-2 and CDKB2-1. Interacts with CYCD2-1 and At4g14310.

In terms of biological role, associates with cyclin-dependent kinases (CDKs) and plays an essential role in the regulation of the cell cycle that affects plant growth rate. May inhibit both the G1/S and G2/M phases. In Arabidopsis thaliana (Mouse-ear cress), this protein is Cyclin-dependent kinases regulatory subunit 1 (CKS1).